Reading from the N-terminus, the 292-residue chain is Diaminopimelate epimerase (292 aa).

Positions 14 and 78 each coordinate substrate. The active-site Proton donor is the C87. Substrate-binding positions include 88–89 (GN), N164, N197, and 221–222 (ER). Residue C230 is the Proton acceptor of the active site. 231–232 (GT) provides a ligand contact to substrate.

This sequence belongs to the diaminopimelate epimerase family. As to quaternary structure, homodimer.

It is found in the cytoplasm. It carries out the reaction (2S,6S)-2,6-diaminopimelate = meso-2,6-diaminopimelate. Its pathway is amino-acid biosynthesis; L-lysine biosynthesis via DAP pathway; DL-2,6-diaminopimelate from LL-2,6-diaminopimelate: step 1/1. Its function is as follows. Catalyzes the stereoinversion of LL-2,6-diaminopimelate (L,L-DAP) to meso-diaminopimelate (meso-DAP), a precursor of L-lysine and an essential component of the bacterial peptidoglycan. The polypeptide is Diaminopimelate epimerase (Leifsonia xyli subsp. xyli (strain CTCB07)).